A 977-amino-acid polypeptide reads, in one-letter code: uncharacterized protein (977 aa).

Positions 1–24 are enriched in polar residues; the sequence is MMQQRSGSLSLLSNAVQAGQSSDP. The segment at 1 to 65 is disordered; sequence MMQQRSGSLS…HEKTKAGKDR (65 aa). The zn(2)-C6 fungal-type DNA-binding region spans 72–99; that stretch reads CQSCRKKKVKCSGERPSCDQCLKHNIPC. Residues 176–195 form a disordered region; the sequence is LSHPTIVPSSNSSSLLNSTN. Residues 177–195 show a composition bias toward low complexity; that stretch reads SHPTIVPSSNSSSLLNSTN. Serine 220 carries the post-translational modification Phosphoserine. Disordered stretches follow at residues 287-307, 357-380, and 751-774; these read TDSLSIVSNPSQTPAKFDSNR, NSASSGLSTSYTNNNDTTSDNNSL, and HTPINVTNGESQNNSNNDPSANGA. A compositionally biased stretch (low complexity) spans 364–379; it reads STSYTNNNDTTSDNNS. Residues 751–770 are compositionally biased toward polar residues; the sequence is HTPINVTNGESQNNSNNDPS.

Its subcellular location is the cytoplasm. It is found in the nucleus. This is an uncharacterized protein from Schizosaccharomyces pombe (strain 972 / ATCC 24843) (Fission yeast).